Here is a 127-residue protein sequence, read N- to C-terminus: Small ribosomal subunit protein uS13 (127 aa).

The interval 95–127 is disordered; that stretch reads GLPVHGQRTSTNARTRKGPRRAAVKKKGGAKKK. Over residues 108-127 the composition is skewed to basic residues; the sequence is RTRKGPRRAAVKKKGGAKKK.

It belongs to the universal ribosomal protein uS13 family. In terms of assembly, part of the 30S ribosomal subunit. Forms a loose heterodimer with protein S19. Forms two bridges to the 50S subunit in the 70S ribosome.

Located at the top of the head of the 30S subunit, it contacts several helices of the 16S rRNA. In the 70S ribosome it contacts the 23S rRNA (bridge B1a) and protein L5 of the 50S subunit (bridge B1b), connecting the 2 subunits; these bridges are implicated in subunit movement. Contacts the tRNAs in the A and P-sites. The sequence is that of Small ribosomal subunit protein uS13 from Desulfatibacillum aliphaticivorans.